A 153-amino-acid chain; its full sequence is Large ribosomal subunit protein uL22 (153 aa).

Belongs to the universal ribosomal protein uL22 family. Part of the 50S ribosomal subunit.

Functionally, this protein binds specifically to 23S rRNA. It makes multiple contacts with different domains of the 23S rRNA in the assembled 50S subunit and ribosome. Its function is as follows. The globular domain of the protein is located near the polypeptide exit tunnel on the outside of the subunit, while an extended beta-hairpin is found that lines the wall of the exit tunnel in the center of the 70S ribosome. In Methanococcus aeolicus (strain ATCC BAA-1280 / DSM 17508 / OCM 812 / Nankai-3), this protein is Large ribosomal subunit protein uL22.